We begin with the raw amino-acid sequence, 578 residues long: Matrix metalloproteinase-17 (578 aa).

Disordered stretches follow at residues 1–22 (MGRR…PGPG) and 107–133 (PRCS…TKWS). A signal peptide spans 1 to 39 (MGRRPRGPGSPRGPGPPRPGPGLPPLLLVLALAAHGGCA). Residues 11–22 (PRGPGPPRPGPG) show a composition bias toward pro residues. Residues 40-124 (APAPRAEDLS…PPGAQSRRKR (85 aa)) constitute a propeptide that is removed on maturation. The Cysteine switch motif lies at 107-114 (PRCSLPDL). Cysteine 109 is a Zn(2+) binding site. N-linked (GlcNAc...) asparagine glycosylation is present at asparagine 136. A Zn(2+)-binding site is contributed by histidine 247. Residue glutamate 248 is part of the active site. Zn(2+)-binding residues include histidine 251 and histidine 257. The disordered stretch occupies residues 301–334 (PTAQLDTPEPEEPPLLPEPPNNRSSTPPQKDVPH). N-linked (GlcNAc...) asparagine glycosylation is present at asparagine 322. Hemopexin repeat units lie at residues 333–382 (PHRC…WRGL), 386–432 (LDSV…SLPP), 436–479 (DAVF…WRGV), and 480–527 (PSML…WLVC). Cysteine 336 and cysteine 527 are oxidised to a cystine. Residue serine 558 is the site of GPI-anchor amidated serine attachment. The propeptide at 559 to 578 (DAHRLALPSLLLLTPLLWGL) is removed in mature form.

This sequence belongs to the peptidase M10A family. The cofactor is Zn(2+). Requires Ca(2+) as cofactor. The precursor is cleaved by a furin endopeptidase. In terms of tissue distribution, expressed by monocytes and macrophages.

The protein resides in the cell membrane. It is found in the secreted. The protein localises to the extracellular space. It localises to the extracellular matrix. Endopeptidase that degrades various components of the extracellular matrix, such as fibrin. May be involved in the activation of membrane-bound precursors of growth factors or inflammatory mediators, such as tumor necrosis factor-alpha. May also be involved in tumoral process. Not obvious if able to proteolytically activate progelatinase A. Does not hydrolyze collagen types I, II, III, IV and V, gelatin, fibronectin, laminin, decorin nor alpha1-antitrypsin. In Mus musculus (Mouse), this protein is Matrix metalloproteinase-17 (Mmp17).